The sequence spans 337 residues: DNA-directed RNA polymerase subunit alpha (337 aa).

The segment at 1–233 (MIQKNWQELI…DQLSIFVNFE (233 aa)) is alpha N-terminal domain (alpha-NTD). Residues 249–337 (FNPALLKKVD…DLAKRYEDQY (89 aa)) are alpha C-terminal domain (alpha-CTD).

It belongs to the RNA polymerase alpha chain family. As to quaternary structure, homodimer. The RNAP catalytic core consists of 2 alpha, 1 beta, 1 beta' and 1 omega subunit. When a sigma factor is associated with the core the holoenzyme is formed, which can initiate transcription.

The catalysed reaction is RNA(n) + a ribonucleoside 5'-triphosphate = RNA(n+1) + diphosphate. Functionally, DNA-dependent RNA polymerase catalyzes the transcription of DNA into RNA using the four ribonucleoside triphosphates as substrates. The sequence is that of DNA-directed RNA polymerase subunit alpha from Brucella abortus (strain S19).